The chain runs to 313 residues: MGANSLPTDATLDLDEQISQLMQCKPLSEQQVRALCEKAKEILMDESNVQPVKSPVTICGDIHGQFHDLAELFRIGGKCPDTNYLFMGDYVDRGYYSVETVTLLVGLKVRYPQRITILRGNHESRQITQVYGFYDECLRKYGNANVWKIFTDLFDYFPLTALVESEIFCLHGGLSPSIETLDNIRNFDRVQEVPHEGPMCDLLWSDPDDRCGWGISPRGAGYTFGQDISEQFNHTNNLKLIARAHQLVMDGFNWAHEQKVVTIFSAPNYCYRCGNMASILEVDDCRNHTFIQFEPAPRRGEPDVTRRTPDYFL.

Residues Asp-61, His-63, Asp-89, and Asn-121 each coordinate Mn(2+). The active-site Proton donor is His-122. Mn(2+) is bound by residues His-171 and His-245. Leucine methyl ester is present on Leu-313.

Belongs to the PPP phosphatase family. PP-2A subfamily. As to quaternary structure, PP2A consists of a common heterodimeric core enzyme, composed of a 36 kDa catalytic subunit (subunit C) and a 65 kDa constant regulatory subunit (subunit A), that associates with a variety of regulatory subunits such as subunits B (the R2/B/PR55/B55, R3/B''/PR72/PR130/PR59 and R5/B'/B56 families). Interacts with SIC/RON3. Requires Mn(2+) as cofactor. Post-translationally, reversibly methyl esterified on Leu-313 by leucine carboxyl methyltransferase 1 (LCMT1) and pectin methylesterase 1 (PME1). Carboxyl methylation influences the affinity of the catalytic subunit for the different regulatory subunits, thereby modulating the PP2A holoenzyme's substrate specificity, enzyme activity and cellular localization. In terms of processing, phosphorylation of either threonine (by autophosphorylation-activated protein kinase) or tyrosine results in inactivation of the phosphatase. Auto-dephosphorylation has been suggested as a mechanism for reactivation.

The protein localises to the cytoplasm. The catalysed reaction is O-phospho-L-seryl-[protein] + H2O = L-seryl-[protein] + phosphate. It catalyses the reaction O-phospho-L-threonyl-[protein] + H2O = L-threonyl-[protein] + phosphate. In terms of biological role, functions redundantly with PP2A3, and is involved in establishing auxin gradients, apical-basal axis of polarity and root and shoot apical meristem during embryogenesis. May dephosphorylate PIN1 and regulate its subcellular distribution for polar auxin transport. The holoenzyme composed of PP2AA1, PP2A4 and B'ZETA or B'ETA acts as a negative regulator of plant innate immunity by controlling BAK1 phosphorylation state and activation in surface-localized immune receptor complexes. The chain is Serine/threonine-protein phosphatase PP2A-4 catalytic subunit from Arabidopsis thaliana (Mouse-ear cress).